The chain runs to 561 residues: Urocanate hydratase (561 aa).

Residues 52–53, Gln-130, 176–178, Glu-196, Arg-201, 242–243, 263–267, 273–274, and Tyr-322 each bind NAD(+); these read GG, GMG, NA, QTSAH, and YL. Cys-410 is a catalytic residue. Residue Gly-492 participates in NAD(+) binding.

Belongs to the urocanase family. It depends on NAD(+) as a cofactor.

The protein resides in the cytoplasm. The enzyme catalyses 4-imidazolone-5-propanoate = trans-urocanate + H2O. The protein operates within amino-acid degradation; L-histidine degradation into L-glutamate; N-formimidoyl-L-glutamate from L-histidine: step 2/3. Catalyzes the conversion of urocanate to 4-imidazolone-5-propionate. The protein is Urocanate hydratase of Salmonella typhi.